Consider the following 385-residue polypeptide: Succinyl-diaminopimelate desuccinylase (385 aa).

A Zn(2+)-binding site is contributed by His73. Asp75 is a catalytic residue. Asp106 contacts Zn(2+). The Proton acceptor role is filled by Glu141. Zn(2+)-binding residues include Glu142, Glu170, and His359.

It belongs to the peptidase M20A family. DapE subfamily. In terms of assembly, homodimer. The cofactor is Zn(2+). It depends on Co(2+) as a cofactor.

The enzyme catalyses N-succinyl-(2S,6S)-2,6-diaminopimelate + H2O = (2S,6S)-2,6-diaminopimelate + succinate. Its pathway is amino-acid biosynthesis; L-lysine biosynthesis via DAP pathway; LL-2,6-diaminopimelate from (S)-tetrahydrodipicolinate (succinylase route): step 3/3. Catalyzes the hydrolysis of N-succinyl-L,L-diaminopimelic acid (SDAP), forming succinate and LL-2,6-diaminopimelate (DAP), an intermediate involved in the bacterial biosynthesis of lysine and meso-diaminopimelic acid, an essential component of bacterial cell walls. The polypeptide is Succinyl-diaminopimelate desuccinylase (Methylorubrum extorquens (strain CM4 / NCIMB 13688) (Methylobacterium extorquens)).